The primary structure comprises 275 residues: Prohibitin-1 (275 aa).

Residues 106-109 carry the AIM motif; sequence YQNL.

It belongs to the prohibitin family. As to quaternary structure, the mitochondrial prohibitin complex consists of two subunits (PHB1 and PHB2). The subunits assemble into a membrane-associated ring-shaped supercomplex of approximately 1 mDa. Interacts with ATG24/SNX4; the interaction is direct and plays a role in mitophagy.

The protein localises to the mitochondrion inner membrane. Its function is as follows. Prohibitin probably acts as a holdase/unfoldase for the stabilization of newly synthesized mitochondrial proteins. Involved in mitophagy. Required for the switch to necrotrophic growth. The polypeptide is Prohibitin-1 (Colletotrichum higginsianum (strain IMI 349063) (Crucifer anthracnose fungus)).